A 331-amino-acid polypeptide reads, in one-letter code: Myc-associated zinc finger protein (331 aa).

Disordered stretches follow at residues 46–65 (AQSP…APAA) and 108–131 (TVDT…SAPA). Residues 117 to 127 (PPAPPPPPPAV) are compositionally biased toward pro residues. 4 C2H2-type zinc fingers span residues 177 to 199 (YICA…EAIH), 266 to 288 (HACE…KLSH), 294 to 316 (YQCP…VRSH), and 324 to 331 (YNCSHCGK).

As to quaternary structure, interacts with BPTF. Ubiquitously expressed.

Its subcellular location is the nucleus. Its function is as follows. Transcriptional regulator. Acts as a transcriptional activator that binds to purine-rich GAGA sites found in the promoter of many genes including insulin I and II and islet amyloid polypeptide. This Mesocricetus auratus (Golden hamster) protein is Myc-associated zinc finger protein (MAZ).